The primary structure comprises 398 residues: Vacuolar protease A (398 aa).

Residues 1 to 18 (MKSTSLLTASVLLGSASA) form the signal peptide. Residues 19 to 70 (AVHKLKLNKVPLDEQLYTHNIDAHVRALGQKYMGIRPNVHQELLEENSLNDM) constitute a propeptide, activation peptide. The Peptidase A1 domain occupies 85-395 (YFSEISLGTP…DLGNNAVGLA (311 aa)). Residue Asp103 is part of the active site. Cys116 and Cys121 are disulfide-bonded. N-linked (GlcNAc...) asparagine glycosylation occurs at Asn138. Asp287 is a catalytic residue. A disulfide bond links Cys321 and Cys354. N-linked (GlcNAc...) asparagine glycosylation occurs at Asn338.

This sequence belongs to the peptidase A1 family.

Its subcellular location is the vacuole lumen. The protein localises to the secreted. It catalyses the reaction Hydrolysis of proteins with broad specificity for peptide bonds. Cleaves -Leu-Leu-|-Val-Tyr- bond in a synthetic substrate. Does not act on esters of Tyr or Arg.. In terms of biological role, vacuolar aspartic endopeptidase which is probably also secreted and contributes to virulence. The polypeptide is Vacuolar protease A (pep2) (Aspergillus fumigatus (strain ATCC MYA-4609 / CBS 101355 / FGSC A1100 / Af293) (Neosartorya fumigata)).